The following is a 221-amino-acid chain: ATP phosphoribosyltransferase (221 aa).

Belongs to the ATP phosphoribosyltransferase family. Short subfamily. In terms of assembly, heteromultimer composed of HisG and HisZ subunits.

It localises to the cytoplasm. The catalysed reaction is 1-(5-phospho-beta-D-ribosyl)-ATP + diphosphate = 5-phospho-alpha-D-ribose 1-diphosphate + ATP. It functions in the pathway amino-acid biosynthesis; L-histidine biosynthesis; L-histidine from 5-phospho-alpha-D-ribose 1-diphosphate: step 1/9. Functionally, catalyzes the condensation of ATP and 5-phosphoribose 1-diphosphate to form N'-(5'-phosphoribosyl)-ATP (PR-ATP). Has a crucial role in the pathway because the rate of histidine biosynthesis seems to be controlled primarily by regulation of HisG enzymatic activity. In Anaeromyxobacter dehalogenans (strain 2CP-1 / ATCC BAA-258), this protein is ATP phosphoribosyltransferase.